Reading from the N-terminus, the 475-residue chain is Flotillin-like protein 4 (475 aa).

Coiled coils occupy residues 235–255 (ENQR…KKAA) and 305–325 (QYET…KEAE).

Belongs to the band 7/mec-2 family. Flotillin subfamily. In terms of tissue distribution, expressed in roots and nodules. Primarily expressed in vascular tissues. Upon induction of nodulation, expansion of expression in the root cortex in the region of elongating root hairs, which will eventually become colonized by bacteria. Expressed in the infection zone in nodules.

Its subcellular location is the membrane. The protein resides in the caveola. It localises to the cell membrane. Its function is as follows. May act as a scaffolding protein within caveolar membranes, functionally participating in formation of caveolae or caveolae-like vesicles. Required for normal infection threads initiation and elongation and nodulation. Probably involved in polar growth of the infection thread. The polypeptide is Flotillin-like protein 4 (FLOT4) (Medicago truncatula (Barrel medic)).